Reading from the N-terminus, the 2458-residue chain is Acetyl-CoA carboxylase 2 (2458 aa).

Residue Ser35 is modified to Phosphoserine. Positions 35–155 (SKSEANLIPS…SPSKEDKKQA (121 aa)) are disordered. The segment covering 51–60 (SDNSGETPQR) has biased composition (polar residues). Thr70 is modified (phosphothreonine). Over residues 77 to 87 (ASHKGPKDAGR) the composition is skewed to basic and acidic residues. Phosphoserine occurs at positions 91 and 95. Residues 103–146 (PLSSSDAAPSPELQANGTGTQGLEATDTNGLSSSARPQGQQAGS) are compositionally biased toward polar residues. 5 positions are modified to phosphoserine: Ser169, Ser175, Ser192, Ser195, and Ser200. A disordered region spans residues 174–193 (SSDEDSVAGSSRESTRKGSR). Phosphothreonine is present on Thr207. Position 220 is a phosphoserine (Ser220). At Ser222 the chain carries Phosphoserine; by AMPK. A Biotin carboxylation domain is found at 259 to 761 (VIEKVLIANN…DTGWLDYLIA (503 aa)). Positions 414–609 (DDLQQGKRIS…LPAAQLQIAM (196 aa)) constitute an ATP-grasp domain. Position 458 to 463 (458 to 463 (GGGGKG)) interacts with ATP. Position 469 is a phosphoserine (Ser469). Residues Glu567, Glu580, and Asn582 each contribute to the Mg(2+) site. Mn(2+)-binding residues include Glu567, Glu580, and Asn582. Residue Arg584 is part of the active site. Thr753 carries the post-translational modification Phosphothreonine. The region spanning 888–962 (FEKENDPTVL…EAGCVVARLE (75 aa)) is the Biotinyl-binding domain. N6-biotinyllysine is present on Lys929. Ser1340 bears the Phosphoserine mark. Thr1342 is modified (phosphothreonine). Phosphoserine is present on residues Ser1360 and Ser1405. The CoA carboxyltransferase N-terminal domain occupies 1695–2025 (PYVTKDLLQA…DNHSPVPIIT (331 aa)). The interval 1695-2345 (PYVTKDLLQA…EDQVKQEILQ (651 aa)) is carboxyltransferase. CoA-binding residues include Arg1934, Lys2238, and Arg2240. A CoA carboxyltransferase C-terminal domain is found at 2029 to 2345 (PIDREIEFLP…EDQVKQEILQ (317 aa)).

In terms of assembly, monomer, homodimer, and homotetramer. Forms filamentous polymers. Interacts with MID1IP1; interaction with MID1IP1 promotes oligomerization and increases its activity in a citrate-dependent manner. Requires biotin as cofactor. Mg(2+) is required as a cofactor. The cofactor is Mn(2+). Post-translationally, the biotin cofactor is covalently attached to the central biotinyl-binding domain and is required for the catalytic activity. Phosphorylation at Ser-222 by AMPK inactivates the enzyme. Required for the maintenance of skeletal muscle lipid and glucose homeostasis. Widely expressed with highest levels in heart, skeletal muscle, liver, adipose tissue, mammary gland, adrenal gland and colon. Isoform 3 is expressed in skeletal muscle, adipose tissue and liver (at protein level). Isoform 3 is detected at high levels in adipose tissue with lower levels in heart, liver, skeletal muscle and testis.

Its subcellular location is the mitochondrion. It carries out the reaction hydrogencarbonate + acetyl-CoA + ATP = malonyl-CoA + ADP + phosphate + H(+). Its pathway is lipid metabolism; malonyl-CoA biosynthesis; malonyl-CoA from acetyl-CoA: step 1/1. Activity is increased by oligomerization of the protein into filaments. The oligomerization and the activity of the enzyme are inhibited by phosphorylation at Ser-222. Inhibited by its product, malonyl-CoA. Activated by citrate. Activation by MID1IP1 is citrate-dependent. Soraphen A, inhibits the enzyme by preventing the formation of active filamentous oligomers. In terms of biological role, mitochondrial enzyme that catalyzes the carboxylation of acetyl-CoA to malonyl-CoA and plays a central role in fatty acid metabolism. Catalyzes a 2 steps reaction starting with the ATP-dependent carboxylation of the biotin carried by the biotin carboxyl carrier (BCC) domain followed by the transfer of the carboxyl group from carboxylated biotin to acetyl-CoA. Through the production of malonyl-CoA that allosterically inhibits carnitine palmitoyltransferase 1 at the mitochondria, negatively regulates fatty acid oxidation. Together with its cytosolic isozyme ACACA, which is involved in de novo fatty acid biosynthesis, promotes lipid storage. This is Acetyl-CoA carboxylase 2 from Homo sapiens (Human).